The primary structure comprises 71 residues: Disintegrin horridistatin-2 (71 aa).

Positions 1–71 (GEECDCGSPA…ADCPRNGLYG (71 aa)) constitute a Disintegrin domain. 6 disulfides stabilise this stretch: cysteine 4–cysteine 19, cysteine 6–cysteine 14, cysteine 13–cysteine 36, cysteine 27–cysteine 33, cysteine 32–cysteine 57, and cysteine 45–cysteine 64. Residues 49 to 51 (RGD) carry the Cell attachment site motif.

It belongs to the venom metalloproteinase (M12B) family. P-II subfamily. P-IIa sub-subfamily. As to quaternary structure, monomer (disintegrin). In terms of tissue distribution, expressed by the venom gland.

It localises to the secreted. Functionally, inhibits ADP-induced platelet aggregation (IC(50) is 16.2 nM) by binding to alpha-IIb/beta-3 (ITGA2B/ITGB3). The chain is Disintegrin horridistatin-2 from Crotalus horridus (Timber rattlesnake).